The primary structure comprises 306 residues: MNKQLKEFQEYLPKCRKIIALVGAGLSASSGLPTFRGSQGLWKNFNMIDLATPDAFYIDPGLVWQFYSWRRYGALRAKPNKGHYALSKLSHKFNSDEYITITQNVDGLSSRSGHNLDSLYEIHGSLFDLKCTSFMCNYVDHNNFKQPLTKALEDTEFEYSNLSTRKRTFGDSDGNDGVDISLSPQFNPVKTISEKDLPSCPVCHDLLRPGVVWFGESLPLNLITEIDSFVESDPSVDLILVIGTSGTVYPANSYVERVRLKGGKVAIFNTDIEDNILNGKVEDTWGFKGDAAELLPIALKPLIGDI.

In terms of domain architecture, Deacetylase sirtuin-type spans 1-305 (MNKQLKEFQE…PIALKPLIGD (305 aa)). 23–42 (GAGLSASSGLPTFRGSQGLW) contributes to the NAD(+) binding site. Substrate contacts are provided by Tyr-67 and Arg-70. NAD(+) is bound at residue 103 to 106 (QNVD). His-123 serves as the catalytic Proton acceptor. Cys-131, Cys-136, Cys-200, and Cys-203 together coordinate Zn(2+). NAD(+) contacts are provided by residues 243-245 (GTS), 269-271 (NTD), and Ala-291.

The protein belongs to the sirtuin family. Class III subfamily. Zn(2+) serves as cofactor.

It is found in the mitochondrion. The catalysed reaction is N(6)-malonyl-L-lysyl-[protein] + NAD(+) + H2O = 2''-O-malonyl-ADP-D-ribose + nicotinamide + L-lysyl-[protein]. The enzyme catalyses N(6)-succinyl-L-lysyl-[protein] + NAD(+) + H2O = 2''-O-succinyl-ADP-D-ribose + nicotinamide + L-lysyl-[protein]. It catalyses the reaction N(6)-glutaryl-L-lysyl-[protein] + NAD(+) + H2O = 2''-O-glutaryl-ADP-D-ribose + nicotinamide + L-lysyl-[protein]. Functionally, NAD-dependent lysine demalonylase, desuccinylase and deglutarylase that specifically removes malonyl, succinyl and glutaryl groups on target proteins. Has weak NAD-dependent protein deacetylase activity; however this activity may not be physiologically relevant in vivo. The sequence is that of NAD-dependent protein deacylase from Candida albicans (strain SC5314 / ATCC MYA-2876) (Yeast).